The primary structure comprises 325 residues: Secreted frizzled-related protein 3 (325 aa).

Positions Met-1–Ala-32 are cleaved as a signal peptide. In terms of domain architecture, FZ spans Ala-33–Pro-150. 5 cysteine pairs are disulfide-bonded: Cys-35–Cys-96, Cys-43–Cys-89, Cys-80–Cys-119, Cys-108–Cys-147, and Cys-112–Cys-136. Asn-49 carries N-linked (GlcNAc...) asparagine glycosylation. Positions Cys-178 to Leu-298 constitute an NTR domain. A disordered region spans residues Gly-297–Asn-325. Residues Ser-299–Ser-314 are compositionally biased toward low complexity. Over residues Gly-315–Asn-325 the composition is skewed to polar residues.

Belongs to the secreted frizzled-related protein (sFRP) family. As to quaternary structure, interacts with MYOC. Expressed primarily in the cartilaginous cores of the long bone during embryonic and fetal development and in the appendicular skeleton (6-13 weeks). At 13 weeks of gestation, transcripts were present in early chondroblasts of the tarsal bones of the foot, the carpal bones of the hands and the epiphysis of long bones. Highly expressed in placenta and heart, followed by brain, skeletal muscle, kidney and pancreas. Weakly expressed in lung and liver.

The protein resides in the secreted. In terms of biological role, soluble frizzled-related proteins (sFRPS) function as modulators of Wnt signaling through direct interaction with Wnts. They have a role in regulating cell growth and differentiation in specific cell types. SFRP3/FRZB appears to be involved in limb skeletogenesis. Antagonist of Wnt8 signaling. Regulates chondrocyte maturation and long bone development. This Homo sapiens (Human) protein is Secreted frizzled-related protein 3 (FRZB).